The following is a 507-amino-acid chain: UDP-glycosyltransferase 73D1 (507 aa).

UDP-alpha-D-glucose contacts are provided by residues Ser298, 359 to 361, 376 to 384, and 398 to 401; these read SPQ, HCGWNSTIE, and FAEQ.

Belongs to the UDP-glycosyltransferase family.

This chain is UDP-glycosyltransferase 73D1 (UGT73D1), found in Arabidopsis thaliana (Mouse-ear cress).